The sequence spans 321 residues: Probable E3 ubiquitin-protein ligase BAH1-like 1 (321 aa).

One can recognise an SPX domain in the interval 1 to 149 (MKFAKKYEKY…YSKQGQEFKA (149 aa)). The RING-type zinc finger occupies 217-266 (CSICLDTVFDPVALSCGHIYCYLCSCSAASVTIVDGLKSAERKSKCPLCR).

Belongs to the RING-type zinc finger family.

It carries out the reaction S-ubiquitinyl-[E2 ubiquitin-conjugating enzyme]-L-cysteine + [acceptor protein]-L-lysine = [E2 ubiquitin-conjugating enzyme]-L-cysteine + N(6)-ubiquitinyl-[acceptor protein]-L-lysine.. It functions in the pathway protein modification; protein ubiquitination. The chain is Probable E3 ubiquitin-protein ligase BAH1-like 1 from Oryza sativa subsp. indica (Rice).